The sequence spans 237 residues: Oligoribonuclease, mitochondrial (237 aa).

The transit peptide at 1 to 25 (MLGGSLGSRLLRGVGGTRGQFRARG) directs the protein to the mitochondrion. The Exonuclease domain occupies 43 to 207 (MVWVDLEMTG…DDISESIKEL (165 aa)). Asp47 and Glu49 together coordinate Mg(2+). A Phosphoserine modification is found at Ser92. Residue Tyr122 is modified to Phosphotyrosine. Asp147 is a Mg(2+) binding site. N6-acetyllysine is present on Lys173. Residue His194 is part of the active site. A Mg(2+)-binding site is contributed by Asp199.

It belongs to the oligoribonuclease family. In terms of assembly, homodimer. Homotetramer. It depends on Mn(2+) as a cofactor. Mg(2+) is required as a cofactor.

The protein localises to the mitochondrion intermembrane space. The protein resides in the mitochondrion matrix. It localises to the mitochondrion. It is found in the cytoplasm. Its subcellular location is the nucleus. In terms of biological role, 3'-to-5'exoribonuclease that preferentially degrades DNA and RNA oligonucleotides composed of only two nucleotides. Binds and degrades longer oligonucleotides with a lower affinity. Plays dual roles in mitochondria, scavenging nanoRNAs (small RNA oligonucleotides of &lt;5 nucleotides) that are produced by the degradosome and clearing short RNAs that are generated by RNA processing. Essential for correct initiation of mitochondrial transcription, degrading mitochondrial RNA dinucleotides to prevent RNA-primed transcription at non-canonical sites in the mitochondrial genome. Essential for embryonic development. This chain is Oligoribonuclease, mitochondrial (REXO2), found in Bos taurus (Bovine).